We begin with the raw amino-acid sequence, 98 residues long: NADH-ubiquinone oxidoreductase chain 4L (98 aa).

The next 3 helical transmembrane spans lie at 1 to 21, 29 to 49, and 61 to 81; these read MSLI…GLLM, SLLC…MMVL, and IILL…LVMI.

It belongs to the complex I subunit 4L family. In terms of assembly, core subunit of respiratory chain NADH dehydrogenase (Complex I) which is composed of 45 different subunits.

It is found in the mitochondrion inner membrane. It carries out the reaction a ubiquinone + NADH + 5 H(+)(in) = a ubiquinol + NAD(+) + 4 H(+)(out). Its function is as follows. Core subunit of the mitochondrial membrane respiratory chain NADH dehydrogenase (Complex I) which catalyzes electron transfer from NADH through the respiratory chain, using ubiquinone as an electron acceptor. Part of the enzyme membrane arm which is embedded in the lipid bilayer and involved in proton translocation. This Rhinoceros unicornis (Greater Indian rhinoceros) protein is NADH-ubiquinone oxidoreductase chain 4L (MT-ND4L).